A 539-amino-acid chain; its full sequence is Alpha-aminoadipic semialdehyde dehydrogenase (539 aa).

Residues 1–26 (MLRLARPLCVQTVKASKLSRLWSRPA) constitute a mitochondrion transit peptide. N6-acetyllysine; alternate is present on residues K86, K94, and K97. N6-succinyllysine; alternate occurs at positions 86, 94, and 97. NAD(+) is bound by residues 192-194 (TAF), K218, 258-259 (GT), 274-275 (GS), 274-279 (GSTQVG), and 296-297 (EL). The active-site Proton acceptor is E296. C330 serves as the catalytic Nucleophile. A (S)-2-amino-6-oxohexanoate-binding site is contributed by T331. Residue E427 participates in NAD(+) binding. N6-acetyllysine is present on K462. (S)-2-amino-6-oxohexanoate contacts are provided by G489 and A490. K500 is subject to N6-acetyllysine. Residue K537 is modified to N6-succinyllysine.

The protein belongs to the aldehyde dehydrogenase family. In terms of assembly, homotetramer. In terms of tissue distribution, abundant in kidney, liver, cochlea and outer hair cells but not inner hair cells or vestibular type I hair cells. Very low levels in lung, brain, intestine and pancreas.

It is found in the cytoplasm. Its subcellular location is the cytosol. The protein resides in the nucleus. The protein localises to the mitochondrion. The catalysed reaction is nonanal + NAD(+) + H2O = nonanoate + NADH + 2 H(+). It catalyses the reaction (S)-2-amino-6-oxohexanoate + NAD(+) + H2O = L-2-aminoadipate + NADH + 2 H(+). It carries out the reaction betaine aldehyde + NAD(+) + H2O = glycine betaine + NADH + 2 H(+). The enzyme catalyses an aldehyde + NAD(+) + H2O = a carboxylate + NADH + 2 H(+). The catalysed reaction is hexanal + NAD(+) + H2O = hexanoate + NADH + 2 H(+). It catalyses the reaction octanal + NAD(+) + H2O = octanoate + NADH + 2 H(+). It carries out the reaction (E)-non-2-enal + NAD(+) + H2O = (E)-non-2-enoate + NADH + 2 H(+). The enzyme catalyses (E)-4-hydroxynon-2-enal + NAD(+) + H2O = (E)-4-hydroxynon-2-enoate + NADH + 2 H(+). It participates in amine and polyamine biosynthesis; betaine biosynthesis via choline pathway; betaine from betaine aldehyde: step 1/1. Its function is as follows. Multifunctional enzyme mediating important protective effects. Metabolizes betaine aldehyde to betaine, an important cellular osmolyte and methyl donor. Protects cells from oxidative stress by metabolizing a number of lipid peroxidation-derived aldehydes. Involved in lysine catabolism. The chain is Alpha-aminoadipic semialdehyde dehydrogenase from Rattus norvegicus (Rat).